A 432-amino-acid chain; its full sequence is Golgin subfamily A member 6-like protein 9 (432 aa).

The span at 1–11 shows a compositional bias: pro residues; sequence MWPQPRLPPHP. Disordered regions lie at residues 1–77 and 349–411; these read MWPQ…YGEG and KELE…AGGA. A compositionally biased stretch (polar residues) spans 51–62; the sequence is NGSSPDTFTSGG. The stretch at 157–354 forms a coiled coil; sequence SKMEQLQDET…EQQVKELEKS (198 aa). Residues 349–362 show a composition bias toward basic and acidic residues; sequence KELEKSGGAEEPRG. A compositionally biased stretch (low complexity) spans 366–381; sequence AAAARPVAGAPVPQGA.

Belongs to the GOLGA6 family.

The chain is Golgin subfamily A member 6-like protein 9 from Homo sapiens (Human).